The following is a 671-amino-acid chain: Spartin (671 aa).

The residue at position 1 (M1) is an N-acetylmethionine. Residues 16–94 (IKEAYEKAFM…LQNVRTRLEI (79 aa)) form the MIT domain. The segment at 110 to 175 (VPKLYPEFPP…CPAEAPPAYS (66 aa)) is disordered. The span at 118–128 (PPKDACKKSPE) shows a compositional bias: basic and acidic residues. S126 is modified (phosphoserine). A compositionally biased stretch (low complexity) spans 143–158 (GSASAACAGPSGAPSA). Residues 159-174 (LPVPSPSCPAEAPPAY) show a composition bias toward pro residues. The ubiquitin-binding region (UBR) domain stretch occupies residues 190–385 (DSGEFSSVGE…SIDQGSKDAR (196 aa)). Positions 193–200 (EFSSVGED) match the LC3-interacting region (LIR); mediates interaction with MAP1LC3A AND MAP1LC3C motif. The segment at 346–421 (FQIPGRSSHP…SSEEKSKELP (76 aa)) is disordered. Residue K360 forms a Glycyl lysine isopeptide (Lys-Gly) (interchain with G-Cter in ubiquitin) linkage. Over residues 369–379 (QSSSSGSSIDQ) the composition is skewed to low complexity. Residues 384–393 (ARHKGKRGKK) show a composition bias toward basic residues. The region spanning 431–615 (ILSGASWVSW…YNIDNIGIKA (185 aa)) is the Senescence domain. A required for localization to lipid droplets region spans residues 435–507 (ASWVSWGLVK…LVDGVCTVAN (73 aa)). S474 is subject to Phosphoserine. Residues 635 to 671 (VERPQRESQGGATSTEGRRDIGKQVEEEKPGAGKKDK) form a disordered region. Over residues 650-671 (EGRRDIGKQVEEEKPGAGKKDK) the composition is skewed to basic and acidic residues.

Interacts with ITCH and WWP1. Interacts (via MIT domain) with IST1; leading to the recruitment of SPART to midbodies. Interacts with MAP1LC3A and MAP1LC3C. Ubiquitinated; ubiquitination does not require ITCH and WWP1. As to expression, brain (at protein level).

Its subcellular location is the cytoplasm. It localises to the midbody. The protein resides in the lipid droplet. Lipophagy receptor that plays an important role in lipid droplet (LD) turnover in motor neurons. Localizes to LDs and interacts with components of the autophagy machinery, such as MAP1LC3A/C proteins to deliver LDs to autophagosomes for degradation via lipophagy. Lipid transfer protein required for lipid droplet degradation, including by lipophagy. Can bind and transfer all lipid species found in lipid droplets, from phospholipids to triglycerides and sterol esters but the direction of lipid transfer by spartin and its cargos are unknown. May be implicated in endosomal trafficking, or microtubule dynamics, or both. Participates in cytokinesis. This is Spartin from Mus musculus (Mouse).